A 274-amino-acid chain; its full sequence is Penicillin-insensitive murein endopeptidase (274 aa).

An N-terminal signal peptide occupies residues 1-19 (MKKTAIALLAWFVSSASLA). 3 disulfide bridges follow: Cys44–Cys265, Cys187–Cys235, and Cys216–Cys223. Zn(2+) is bound by residues His110, His113, Asp120, Asp147, His150, and His211. The tract at residues 225-274 (DQPLPPPGDGCGAELQSWFEPPKPGTTKPEKKTPPPLPPSCQALLDEHVL) is disordered.

This sequence belongs to the peptidase M74 family. Dimer. Zn(2+) serves as cofactor.

Its subcellular location is the periplasm. In terms of biological role, murein endopeptidase that cleaves the D-alanyl-meso-2,6-diamino-pimelyl amide bond that connects peptidoglycan strands. Likely plays a role in the removal of murein from the sacculus. In Salmonella arizonae (strain ATCC BAA-731 / CDC346-86 / RSK2980), this protein is Penicillin-insensitive murein endopeptidase.